The following is a 348-amino-acid chain: Fructose-1,6-bisphosphatase (348 aa).

The Pro/N-degron signature appears at 2–5 (PTLV). The residue at position 12 (Ser12) is a Phosphoserine. AMP contacts are provided by residues 27–31 (IIEHQ) and 38–42 (TGDFT). Asp79 and Glu108 together coordinate Mg(2+). Position 122–123 (122–123 (SY)) interacts with AMP. Mg(2+) contacts are provided by Asp128, Ile130, and Asp131. 131 to 134 (DGSS) is a binding site for substrate. Residue Arg150 participates in AMP binding. Residues 222–225 (NEGN), 255–260 (RYVGSM), Tyr276, and 286–288 (KLR) contribute to the substrate site. Glu292 provides a ligand contact to Mg(2+).

The protein belongs to the FBPase class 1 family. Homotetramer. Mg(2+) is required as a cofactor. Post-translationally, ubiquitinated. Targeted for proteasomal degradation when cells are shifted to glucose-containing growth medium.

The catalysed reaction is beta-D-fructose 1,6-bisphosphate + H2O = beta-D-fructose 6-phosphate + phosphate. The protein operates within carbohydrate biosynthesis; gluconeogenesis. Subject to complex allosteric regulation. The enzyme can assume an active R-state, or an inactive T-state. Intermediate conformations may exist. AMP acts as allosteric inhibitor. AMP binding affects the turnover of bound substrate and not the affinity for substrate. The sequence is that of Fructose-1,6-bisphosphatase (FBP1) from Saccharomyces cerevisiae (strain ATCC 204508 / S288c) (Baker's yeast).